Consider the following 614-residue polypeptide: DNA mismatch repair protein MutL (614 aa).

Belongs to the DNA mismatch repair MutL/HexB family.

This protein is involved in the repair of mismatches in DNA. It is required for dam-dependent methyl-directed DNA mismatch repair. May act as a 'molecular matchmaker', a protein that promotes the formation of a stable complex between two or more DNA-binding proteins in an ATP-dependent manner without itself being part of a final effector complex. The polypeptide is DNA mismatch repair protein MutL (Thermoanaerobacter sp. (strain X514)).